The sequence spans 280 residues: MGRPPCCDKIGIKKGPWTPEEDIILVSYIQEHGPGNWRSVPTNTGLLRCSKSCRLRWTNYLRPGIKRGNFTPHEEGMIIHLQALLGNKWASIASYLPQRTDNDIKNYWNTHLKKKLNKSDSDERSRSENIALQTSSTRNTINHRSTYASSTENISRLLEGWMRASPKSSTSTTFLEHKMQNRTNNFIDHHSDQFPYEQLQGSWEEGHSKGINGDDDQGIKNSENNNGDDVHHEDGDHEDDDDHNATPPLTFIEKWLLEETSTTGGQMEEMSHLMELSNML.

2 consecutive HTH myb-type domains span residues 9–65 (KIGI…RPGI) and 66–116 (KRGN…KKKL). DNA-binding regions (H-T-H motif) lie at residues 37 to 61 (WRSVPTNTGLLRCSKSCRLRWTNYL) and 89 to 112 (WASIASYLPQRTDNDIKNYWNTHL). 2 positions are modified to S-nitrosocysteine: cysteine 49 and cysteine 53. Over residues 118-127 (KSDSDERSRS) the composition is skewed to basic and acidic residues. Disordered regions lie at residues 118 to 149 (KSDSDERSRSENIALQTSSTRNTINHRSTYAS) and 204 to 247 (EEGH…NATP). Over residues 128–149 (ENIALQTSSTRNTINHRSTYAS) the composition is skewed to polar residues.

As to expression, specifically expressed in guard cells. Present in seedlings, leaves, stems and flowers.

The protein localises to the nucleus. Transcription factor involved in the regulation of gene (e.g. drought-regulated and flavonoid biosynthetic genes) expression and stomatal movements leading to negative regulation of responses to drought and responses to other physiological stimuli (e.g. light). Promotes guard cell deflation in response to water deficit. Triggers root growth upon osmotic stress (e.g. mannitol containing medium). In Arabidopsis thaliana (Mouse-ear cress), this protein is Transcription factor MYB60.